A 269-amino-acid polypeptide reads, in one-letter code: Ribosomal RNA small subunit methyltransferase A (269 aa).

S-adenosyl-L-methionine contacts are provided by asparagine 20, leucine 22, glycine 47, glutamate 68, aspartate 90, and asparagine 110.

This sequence belongs to the class I-like SAM-binding methyltransferase superfamily. rRNA adenine N(6)-methyltransferase family. RsmA subfamily.

It localises to the cytoplasm. It catalyses the reaction adenosine(1518)/adenosine(1519) in 16S rRNA + 4 S-adenosyl-L-methionine = N(6)-dimethyladenosine(1518)/N(6)-dimethyladenosine(1519) in 16S rRNA + 4 S-adenosyl-L-homocysteine + 4 H(+). Specifically dimethylates two adjacent adenosines (A1518 and A1519) in the loop of a conserved hairpin near the 3'-end of 16S rRNA in the 30S particle. May play a critical role in biogenesis of 30S subunits. The protein is Ribosomal RNA small subunit methyltransferase A of Chlorobium phaeobacteroides (strain DSM 266 / SMG 266 / 2430).